Reading from the N-terminus, the 114-residue chain is DNA-binding protein Mbur_0117 (114 aa).

The segment at 14–37 (ELQQQQSSPQNDAQAAYQQEQAQA) is disordered. Residues 16–35 (QQQQSSPQNDAQAAYQQEQA) are compositionally biased toward low complexity.

The protein belongs to the PDCD5 family.

The polypeptide is DNA-binding protein Mbur_0117 (Methanococcoides burtonii (strain DSM 6242 / NBRC 107633 / OCM 468 / ACE-M)).